A 375-amino-acid polypeptide reads, in one-letter code: Alanine racemase (375 aa).

Residue K45 is the Proton acceptor; specific for D-alanine of the active site. K45 carries the N6-(pyridoxal phosphate)lysine modification. R141 provides a ligand contact to substrate. The active-site Proton acceptor; specific for L-alanine is the Y270. M318 provides a ligand contact to substrate.

This sequence belongs to the alanine racemase family. Pyridoxal 5'-phosphate serves as cofactor.

It carries out the reaction L-alanine = D-alanine. It participates in amino-acid biosynthesis; D-alanine biosynthesis; D-alanine from L-alanine: step 1/1. Functionally, catalyzes the interconversion of L-alanine and D-alanine. May also act on other amino acids. This Pseudoalteromonas atlantica (strain T6c / ATCC BAA-1087) protein is Alanine racemase (alr).